A 379-amino-acid polypeptide reads, in one-letter code: Putative nucleosome assembly protein C2D10.11C (379 aa).

Over residues 1 to 10 (MSKGPGDFKK) the composition is skewed to basic and acidic residues. Disordered regions lie at residues 1–30 (MSKG…DVHL) and 345–379 (SDFN…EISD). A compositionally biased stretch (polar residues) spans 16–28 (AAQTPQNTPSSDV).

Belongs to the nucleosome assembly protein (NAP) family.

The protein resides in the nucleus. The chain is Putative nucleosome assembly protein C2D10.11C from Schizosaccharomyces pombe (strain 972 / ATCC 24843) (Fission yeast).